A 291-amino-acid polypeptide reads, in one-letter code: 4-diphosphocytidyl-2-C-methyl-D-erythritol kinase (291 aa).

Lysine 11 is a catalytic residue. Position 97–107 (97–107 (PVAAGIGGGSS)) interacts with ATP. Aspartate 139 is a catalytic residue.

This sequence belongs to the GHMP kinase family. IspE subfamily.

The catalysed reaction is 4-CDP-2-C-methyl-D-erythritol + ATP = 4-CDP-2-C-methyl-D-erythritol 2-phosphate + ADP + H(+). It functions in the pathway isoprenoid biosynthesis; isopentenyl diphosphate biosynthesis via DXP pathway; isopentenyl diphosphate from 1-deoxy-D-xylulose 5-phosphate: step 3/6. In terms of biological role, catalyzes the phosphorylation of the position 2 hydroxy group of 4-diphosphocytidyl-2C-methyl-D-erythritol. This is 4-diphosphocytidyl-2-C-methyl-D-erythritol kinase from Methylorubrum extorquens (strain CM4 / NCIMB 13688) (Methylobacterium extorquens).